Here is a 463-residue protein sequence, read N- to C-terminus: MDTALKRSRSDEPAELPPPAREVEEKEEEEERMEQGLEEEEEEVDPRIQGELEKLNQSTDDINRRETELEDARQKFRSVLVEATVKLDELAKKIGKAVEDSKPYWEARRVARQAQLEAQKATQDFQRATEVLRAAKETISLAEQRLLEDDKRQFDSAWQEMLNHATQRVMEAEQTKTRSELVHKETAARYNAAMGRMRQLEKKLKRAINKSKPYFELKAKYYVQLEQLKKTVDDLQAKLALAKGEYKAALKSLERISDEIHERRRSNAMGPRGCGVGAEGSIASVENLPVSKPEPDAISVASEAFEDDNCSNLVSEDDSETQSVSSFSSGPTSPSEMPDQFPAVARPGSLDLPSPVSLSEFGMMFPILGPRSECSGASSPECEVERGDRAEGAENKMSDKANNNRVLGSTNGGSGRSRSQSSTSLESQALETRMKQLSLQCSKGRDGIIADIKMIFIFYTFLQ.

The segment covering 1–12 (MDTALKRSRSDE) has biased composition (basic and acidic residues). The interval 1–69 (MDTALKRSRS…DDINRRETEL (69 aa)) is disordered. The span at 25-44 (EKEEEEERMEQGLEEEEEEV) shows a compositional bias: acidic residues. The sufficient for interaction with RAB11A and for guanine nucleotide exchange activity stretch occupies residues 33 to 268 (MEQGLEEEEE…EIHERRRSNA (236 aa)). A compositionally biased stretch (basic and acidic residues) spans 45–54 (DPRIQGELEK). 4 coiled-coil regions span residues 47–93 (RIQG…LAKK), 100–148 (DSKP…RLLE), 157–203 (AWQE…LEKK), and 214–258 (YFEL…RISD). Over residues 309-320 (NCSNLVSEDDSE) the composition is skewed to acidic residues. Residues 309–348 (NCSNLVSEDDSETQSVSSFSSGPTSPSEMPDQFPAVARPG) form a disordered region. Low complexity predominate over residues 323–335 (SVSSFSSGPTSPS). Ser354 is subject to Phosphoserine; by MAPK12 and MAPK9. The disordered stretch occupies residues 372-429 (SECSGASSPECEVERGDRAEGAENKMSDKANNNRVLGSTNGGSGRSRSQSSTSLESQA). Phosphoserine occurs at positions 378 and 379. The segment covering 383 to 399 (EVERGDRAEGAENKMSD) has biased composition (basic and acidic residues). Positions 416–428 (RSRSQSSTSLESQ) are enriched in low complexity. Phosphoserine is present on residues Ser421 and Ser424.

This sequence belongs to the SH3BP5 family. In terms of assembly, interacts with BTK. Interacts with all isoforms of MAPK8, MAPK9, MAPK10 and MAPK12. Interacts with GDP-bound and nucleotide-free forms of RAB11A.

It is found in the cytoplasmic vesicle membrane. The protein localises to the mitochondrion. In terms of biological role, functions as a guanine nucleotide exchange factor (GEF) with specificity for RAB11A and RAB25. Inhibits the auto- and transphosphorylation activity of BTK. Plays a negative regulatory role in BTK-related cytoplasmic signaling in B-cells. May be involved in BCR-induced apoptotic cell death. In Mus musculus (Mouse), this protein is SH3 domain-binding protein 5 (Sh3bp5).